A 276-amino-acid chain; its full sequence is Large ribosomal subunit protein uL2c (276 aa).

The interval 225-276 (AMNPVDHPHGGGEGRTPIGRKKPVTPWGYSALGKKSRKRNRYSDASILRRRE) is disordered.

The protein belongs to the universal ribosomal protein uL2 family. As to quaternary structure, part of the 50S ribosomal subunit.

It localises to the plastid. It is found in the chloroplast. The sequence is that of Large ribosomal subunit protein uL2c (rpl2) from Pinus koraiensis (Korean pine).